Reading from the N-terminus, the 346-residue chain is Ribosomal RNA small subunit methyltransferase H (346 aa).

S-adenosyl-L-methionine contacts are provided by residues G53–Y55, D70, F97, D114, and Q121.

This sequence belongs to the methyltransferase superfamily. RsmH family.

Its subcellular location is the cytoplasm. It carries out the reaction cytidine(1402) in 16S rRNA + S-adenosyl-L-methionine = N(4)-methylcytidine(1402) in 16S rRNA + S-adenosyl-L-homocysteine + H(+). Functionally, specifically methylates the N4 position of cytidine in position 1402 (C1402) of 16S rRNA. This Bartonella henselae (strain ATCC 49882 / DSM 28221 / CCUG 30454 / Houston 1) (Rochalimaea henselae) protein is Ribosomal RNA small subunit methyltransferase H.